A 316-amino-acid polypeptide reads, in one-letter code: Ribosomal RNA small subunit methyltransferase H (316 aa).

S-adenosyl-L-methionine is bound by residues 35–37 (AGH), aspartate 55, phenylalanine 84, aspartate 105, and glutamine 112.

This sequence belongs to the methyltransferase superfamily. RsmH family.

It localises to the cytoplasm. It carries out the reaction cytidine(1402) in 16S rRNA + S-adenosyl-L-methionine = N(4)-methylcytidine(1402) in 16S rRNA + S-adenosyl-L-homocysteine + H(+). Functionally, specifically methylates the N4 position of cytidine in position 1402 (C1402) of 16S rRNA. This Streptococcus pneumoniae (strain ATCC 700669 / Spain 23F-1) protein is Ribosomal RNA small subunit methyltransferase H.